The primary structure comprises 36 residues: GDCHKFWGWCRDEPDPCCEHLTCSTKHGWCVWDGSF.

Disulfide bonds link Cys3–Cys18, Cys10–Cys23, and Cys17–Cys30. The residue at position 36 (Phe36) is a Phenylalanine amide.

The protein belongs to the neurotoxin 10 (Hwtx-1) family. Expressed by the venom gland.

Its subcellular location is the secreted. Its function is as follows. Inhibitor of voltage-gated potassium and sodium channels. Among other potassium channels, it selectively inhibits Kv10.1/KCNH1/EAG1 (IC(50)=236 nM) by shifting the voltage dependence of channel activation in a depolarising direction, it shows a maximum inhibition of 80% at saturating concentrations, it shows fast on-rates, and is poorly reversible. It also slightly affects channel inactivation, when the membrane is highly depolarised (&gt;+80 mV). It shows similar potency on Nav1.7/SCN9A (IC(50)=222 nM) and lower potency on Nav1.2/SCN2A (IC(50)=519 nM). The polypeptide is Mu/kappa-theraphotoxin-Ap1a (Avicularia purpurea (Ecuadorian purple pinktoe tarantula)).